The primary structure comprises 144 residues: Ribosome maturation factor RimP (144 aa).

Belongs to the RimP family.

The protein resides in the cytoplasm. Required for maturation of 30S ribosomal subunits. The chain is Ribosome maturation factor RimP from Azoarcus sp. (strain BH72).